The sequence spans 422 residues: UDP-N-acetylglucosamine 1-carboxyvinyltransferase (422 aa).

A phosphoenolpyruvate-binding site is contributed by 22-23 (KN). R94 serves as a coordination point for UDP-N-acetyl-alpha-D-glucosamine. C118 (proton donor) is an active-site residue. Position 118 is a 2-(S-cysteinyl)pyruvic acid O-phosphothioketal (C118). UDP-N-acetyl-alpha-D-glucosamine-binding positions include 123 to 127 (RPIDL), D309, and L331.

Belongs to the EPSP synthase family. MurA subfamily.

It is found in the cytoplasm. The catalysed reaction is phosphoenolpyruvate + UDP-N-acetyl-alpha-D-glucosamine = UDP-N-acetyl-3-O-(1-carboxyvinyl)-alpha-D-glucosamine + phosphate. Its pathway is cell wall biogenesis; peptidoglycan biosynthesis. Functionally, cell wall formation. Adds enolpyruvyl to UDP-N-acetylglucosamine. The polypeptide is UDP-N-acetylglucosamine 1-carboxyvinyltransferase (Sulfurimonas denitrificans (strain ATCC 33889 / DSM 1251) (Thiomicrospira denitrificans (strain ATCC 33889 / DSM 1251))).